The following is a 704-amino-acid chain: Elongation factor G (704 aa).

The tr-type G domain maps to 8 to 290 (ARYRNIGISA…AVIDYLPSPV (283 aa)). Residues 17–24 (AHIDAGKT), 88–92 (DTPGH), and 142–145 (NKMD) each bind GTP.

The protein belongs to the TRAFAC class translation factor GTPase superfamily. Classic translation factor GTPase family. EF-G/EF-2 subfamily.

It is found in the cytoplasm. Its function is as follows. Catalyzes the GTP-dependent ribosomal translocation step during translation elongation. During this step, the ribosome changes from the pre-translocational (PRE) to the post-translocational (POST) state as the newly formed A-site-bound peptidyl-tRNA and P-site-bound deacylated tRNA move to the P and E sites, respectively. Catalyzes the coordinated movement of the two tRNA molecules, the mRNA and conformational changes in the ribosome. The protein is Elongation factor G of Cronobacter sakazakii (strain ATCC BAA-894) (Enterobacter sakazakii).